The primary structure comprises 497 residues: Thiamine transporter 1 (497 aa).

At M1 the chain carries N-acetylmethionine. Residues 1 to 28 (MDVPGPVSRRAAAAAATVLLRTARVRRE) are Cytoplasmic-facing. A helical membrane pass occupies residues 29–46 (CWFLPTALLCAYGFFASL). At 47–72 (RPSEPFLTPYLLGPDKNLTEREVFNE) the chain is on the extracellular side. N-linked (GlcNAc...) asparagine glycosylation is present at N63. The chain crosses the membrane as a helical span at residues 73-91 (IYPVWTYSYLVLLFPVFLA). Residues 92 to 99 (TDYLRYKP) lie on the Cytoplasmic side of the membrane. A helical membrane pass occupies residues 100 to 118 (VVLLQGLSLIVTWFMLLYA). Residues 119–128 (QGLLAIQFLE) lie on the Extracellular side of the membrane. A helical membrane pass occupies residues 129–149 (FFYGIATATEIAYYSYIYSVV). Topologically, residues 150 to 165 (DLGMYQKVTSYCRSAT) are cytoplasmic. A helical membrane pass occupies residues 166 to 185 (LVGFTVGSVLGQILVSVAGW). The Extracellular portion of the chain corresponds to 186–191 (SLFSLN). A helical transmembrane segment spans residues 192 to 208 (VISLTCVSVAFAVAWFL). Residues 209–285 (PMPQKSLFFH…LLVLKVLWND (77 aa)) are Cytoplasmic-facing. S222 is modified (phosphoserine). The helical transmembrane segment at 286–310 (FLMCYSSRPLLCWSVWWALSTCGYF) threads the bilayer. At 311–337 (QVVNYTQGLWEKVMPSRYAAIYNGGVE) the chain is on the extracellular side. An N-linked (GlcNAc...) asparagine glycan is attached at N314. Residues 338–354 (AVSTLLGAVAVFAVGYI) form a helical membrane-spanning segment. Topologically, residues 355 to 363 (KISWSTWGE) are cytoplasmic. Residues 364-380 (MTLSLFSLLIAAAVYIM) form a helical membrane-spanning segment. Topologically, residues 381–386 (DTVGNI) are extracellular. Residues 387 to 409 (WVCYASYVVFRIIYMLLITIATF) traverse the membrane as a helical segment. Over 410 to 419 (QIAANLSMER) the chain is Cytoplasmic. Residues 420 to 443 (YALVFGVNTFIALALQTLLTLIVV) form a helical membrane-spanning segment. Over 444–455 (DASGLGLEITTQ) the chain is Extracellular. A helical membrane pass occupies residues 456–479 (FLIYASYFALIAVVFLASGAVSVM). At 480–497 (KKCRKLEDPQSSSQVTTS) the chain is on the cytoplasmic side.

It belongs to the reduced folate carrier (RFC) transporter (TC 2.A.48) family. As to quaternary structure, interacts with TSPAN1; this interaction increases the stability of SLC19A2. Interacts with TMEM63B. In terms of tissue distribution, ubiquitous; most abundant in skeletal and cardiac muscle. Medium expression in placenta, heart, liver and kidney, low in lung.

It localises to the cell membrane. The catalysed reaction is thiamine(out) + H(+)(in) = thiamine(in) + H(+)(out). It catalyses the reaction pyridoxine(out) + n H(+)(out) = pyridoxine(in) + n H(+)(in). With respect to regulation, pyridoxine transport is inhibited by carbonyl cyanide p-trifluoromethoxyphenylhydrazone (FCCP) and carbonyl cyanide m-chlorophenylhydrazone (CCCP). Its function is as follows. High-affinity transporter for the intake of thiamine. Mediates H(+)-dependent pyridoxine transport. The protein is Thiamine transporter 1 (SLC19A2) of Homo sapiens (Human).